Reading from the N-terminus, the 1120-residue chain is Topless-related protein 1 (1120 aa).

Positions L4–F36 constitute a LisH domain. The CTLH domain occupies F34 to K92. 2 disordered regions span residues A210–A235 and H283–T307. S214 carries the post-translational modification Phosphoserine. WD repeat units lie at residues S353–Q393, E415–Q454, A460–T501, G504–D545, A548–T591, F595–A634, G639–H678, E699–Q745, M755–T794, N822–T860, P863–K903, G906–S945, E999–R1038, and S1052–G1091. A disordered region spans residues E1087–R1120. A compositionally biased stretch (polar residues) spans G1099–R1120.

Tetramer. Interacts with SNC1 (via TIR domain) and HDA19. Interacts with SPL (via EAR motif). Interacts with SPEAR3/TIE1. Binds to and corepresses GAF1/IDD2. In terms of tissue distribution, highly expressed in stamen primordium, microsporocyte, ovule primordium and megasporocyte during sporogenesis.

Its subcellular location is the nucleus. Functionally, transcriptional corepressor. Activates TIR-NB-LRR R protein-mediated immune responses through repression of negative regulators such as CNGC2/DND1. Negative regulator of jasmonate responses. The protein is Topless-related protein 1 (TPR1) of Arabidopsis thaliana (Mouse-ear cress).